The chain runs to 480 residues: Thyroid receptor-interacting protein 6 (480 aa).

A compositionally biased stretch (pro residues) spans 1-12; sequence MSGPTWLPPKQP. The segment at 1-43 is disordered; the sequence is MSGPTWLPPKQPEPSRLPQGRSLPRGALGPPTAHGATLQPHPR. Arg25 bears the Asymmetric dimethylarginine; alternate mark. Arg25 is modified (omega-N-methylarginine; alternate). Tyr55 carries the phosphotyrosine; by SRC modification. Residues 57–84 form a disordered region; the sequence is PPGVPEDRGPTWVGSHGTPQRLQGLPPD. Ser92 bears the Phosphoserine mark. Positions 107 to 134 are disordered; that stretch reads LDGGRSHAPRRPDRQAFEAPPPHAYRGG. The segment covering 108-122 has biased composition (basic and acidic residues); that stretch reads DGGRSHAPRRPDRQA. 3 positions are modified to omega-N-methylarginine: Arg111, Arg183, and Arg190. Ser193 carries the post-translational modification Phosphoserine. Omega-N-methylarginine is present on residues Arg209 and Arg242. The disordered stretch occupies residues 218–257; that stretch reads RSHREPGPGVPEGPSGVHIPAGGGRGGGHEPQGPLGQPPE. Residues 238 to 247 show a composition bias toward gly residues; that stretch reads AGGGRGGGHE. LIM zinc-binding domains are found at residues 281 to 339, 341 to 401, and 404 to 471; these read GRCG…YVAT, EKCS…KFAP, and SVCG…RIQE. Positions 473 to 480 are interaction with MAGI1 and PTPN13; sequence SATVTTDC.

The protein belongs to the zyxin/ajuba family. In terms of assembly, specifically interacts with the ligand binding domain of the thyroid receptor (TR) in the presence of thyroid hormone. Interacts (via the third LIM domain and C-terminus) with PTPN13 (via the second PDZ domain). Interacts (via the second LIM domain or via the third LIM domain plus C-terminus) with PDLIM4 (via PDZ domain). Found in a complex with PTPN13 and PDLIM4. Interacts with SVIL isoform 2. Interacts with LPAR2 but not other LPA receptors. Interacts with PRKAA2. Interacts with MAGI1. Interacts with SCRIB. In case of infection, interacts with S.typhimurium protein sseI. In terms of processing, phosphorylation at Tyr-55 by SRC is required for enhancement of lysophosphatidic acid-induced cell migration. Tyr-55 is dephosphorylated by PTPN13. Highly expressed in kidney, stomach, lung, heart and testis. Low expression levels in brain, colon, thymus, pancreas and skin. Not expressed in skeletal muscle.

Its subcellular location is the cytoplasm. It localises to the cytoskeleton. The protein localises to the cell junction. It is found in the focal adhesion. The protein resides in the nucleus. Its function is as follows. Relays signals from the cell surface to the nucleus to weaken adherens junction and promote actin cytoskeleton reorganization and cell invasiveness. Involved in lysophosphatidic acid-induced cell adhesion and migration. Acts as a transcriptional coactivator for NF-kappa-B and JUN, and mediates the transrepression of these transcription factors induced by glucocorticoid receptor. This is Thyroid receptor-interacting protein 6 (Trip6) from Mus musculus (Mouse).